A 122-amino-acid polypeptide reads, in one-letter code: Large ribosomal subunit protein uL14c (122 aa).

This sequence belongs to the universal ribosomal protein uL14 family. As to quaternary structure, part of the 50S ribosomal subunit.

It is found in the plastid. The protein localises to the chloroplast. Its function is as follows. Binds to 23S rRNA. The protein is Large ribosomal subunit protein uL14c of Phaseolus vulgaris (Kidney bean).